The following is a 607-amino-acid chain: MEAPAARLFLLLLLGTWAPAPGSASSEAPPLINEDVKRTVDLSSHLAKVTAEVVLAHLGGGSTSRATSFLLALEPELEARLAHLGVQVKGEDEEENNLEVRETKIKGKSGRFFTVRLPVALDPGAKISVIVETVYTHVLQPYPTQITQSEKQFVVFEGNHYFYSPYPTKTQTMRVKLASRNVESYTKLGNPTRSEDLLDYGPFRDVPAYSQDTFKVHYENNSPFLTITSMTRVIEVSHWGNIAVEENVDLKHTGAVLKGPFSRYDYQRQPDSGISSIRSFKTILPAAAQDVYYRDEIGNVSTSHLLILDDSVEMEIRPRFPLFGGWKTHYIVGYNLPSYEYLYNLGDQYALKMRFVDHVFDEQVIDSLTVKIILPEGAKNIEIDSPYEISRAPDELHYTYLDTFGRPVIVAYKKNLVEQHIQDIVVHYTFNKVLMLQEPLLVVAAFYILFFTVIIYVRLDFSITKDPAAEARMKVACITEQVLTLVNKRIGLYRHFDETVNRYKQSRDISTLNSGKKSLETEHKALTSEIALLQSRLKTEGSDLCDRVSEMQKLDAQVKELVLKSAVEAERLVAGKLKKDTYIENEKLISGKRQELVTKIDHILDAL.

The first 23 residues, 1 to 23, serve as a signal peptide directing secretion; that stretch reads MEAPAARLFLLLLLGTWAPAPGS. The Lumenal segment spans residues 24-434; it reads ASSEAPPLIN…VVHYTFNKVL (411 aa). At Lys187 the chain carries N6-acetyllysine. Asn299 carries an N-linked (GlcNAc...) asparagine glycan. The chain crosses the membrane as a helical span at residues 435–455; sequence MLQEPLLVVAAFYILFFTVII. Over 456–607 the chain is Cytoplasmic; that stretch reads YVRLDFSITK…TKIDHILDAL (152 aa). Lys538 is subject to N6-acetyllysine; alternate. Lys538 participates in a covalent cross-link: Glycyl lysine isopeptide (Lys-Gly) (interchain with G-Cter in SUMO2); alternate.

Belongs to the OST1 family. In terms of assembly, component of the oligosaccharyltransferase (OST) complex. OST exists in two different complex forms which contain common core subunits RPN1, RPN2, OST48, OST4, DAD1 and TMEM258, either STT3A or STT3B as catalytic subunits, and form-specific accessory subunits. STT3A complex assembly occurs through the formation of 3 subcomplexes. Subcomplex 1 contains RPN1 and TMEM258, subcomplex 2 contains the STT3A-specific subunits STT3A, DC2/OSTC, and KCP2 as well as the core subunit OST4, and subcomplex 3 contains RPN2, DAD1, and OST48. The STT3A complex can form stable complexes with the Sec61 complex or with both the Sec61 and TRAP complexes. Interacts with TMEM35A/NACHO. Ubiquitinated by the ECS(ASB11) complex. In terms of processing, ufmylated by UFL1 in response to endoplasmic reticulum stress, promoting reticulophagy of endoplasmic reticulum sheets.

The protein resides in the endoplasmic reticulum membrane. It functions in the pathway protein modification; protein glycosylation. In terms of biological role, subunit of the oligosaccharyl transferase (OST) complex that catalyzes the initial transfer of a defined glycan (Glc(3)Man(9)GlcNAc(2) in eukaryotes) from the lipid carrier dolichol-pyrophosphate to an asparagine residue within an Asn-X-Ser/Thr consensus motif in nascent polypeptide chains, the first step in protein N-glycosylation. N-glycosylation occurs cotranslationally and the complex associates with the Sec61 complex at the channel-forming translocon complex that mediates protein translocation across the endoplasmic reticulum (ER). All subunits are required for a maximal enzyme activity. The protein is Dolichyl-diphosphooligosaccharide--protein glycosyltransferase subunit 1 of Pongo abelii (Sumatran orangutan).